Reading from the N-terminus, the 406-residue chain is Phosphorylase b kinase gamma catalytic chain, liver/testis isoform (406 aa).

Residues 24–291 (YDPKDIIGRG…AEQALQHPFF (268 aa)) form the Protein kinase domain. Residues 30–38 (IGRGVSSVV) and lysine 53 contribute to the ATP site. The Proton acceptor role is filled by aspartate 153. Residues 306–330 (QRFRVAVWTILAAGRVALSSHRLRP) form a calmodulin-binding (domain-N) region. Residues 346–370 (VRRLIDNCAFRLYGHWVKKGEQQNR) are calmodulin-binding (domain-C).

This sequence belongs to the protein kinase superfamily. CAMK Ser/Thr protein kinase family. Hexadecamer of 4 heterotetramers, each composed of alpha, beta, gamma, and delta subunits. Alpha (PHKA1 or PHKA2) and beta (PHKB) are regulatory subunits, gamma (PHKG1 or PHKG2) is the catalytic subunit, and delta is calmodulin.

It carries out the reaction 2 ATP + phosphorylase b = 2 ADP + phosphorylase a.. In terms of biological role, catalytic subunit of the phosphorylase b kinase (PHK), which mediates the neural and hormonal regulation of glycogen breakdown (glycogenolysis) by phosphorylating and thereby activating glycogen phosphorylase. May regulate glycogeneolysis in the testis. In vitro, phosphorylates PYGM. This chain is Phosphorylase b kinase gamma catalytic chain, liver/testis isoform (Phkg2), found in Rattus norvegicus (Rat).